The sequence spans 710 residues: DNA-directed RNA polymerase III subunit RPC5 (710 aa).

Basic and acidic residues predominate over residues 146-155 (DAKHREREAA). Positions 146–169 (DAKHREREAANEAGDSSQDEAEED) are disordered. 2 positions are modified to phosphoserine: S161 and S162. A Glycyl lysine isopeptide (Lys-Gly) (interchain with G-Cter in SUMO2) cross-link involves residue K171. S192 carries the phosphoserine modification. The residue at position 224 (Y224) is a Phosphotyrosine. A Glycyl lysine isopeptide (Lys-Gly) (interchain with G-Cter in SUMO2) cross-link involves residue K432. A Glycyl lysine isopeptide (Lys-Gly) (interchain with G-Cter in SUMO1); alternate cross-link involves residue K498. K498 participates in a covalent cross-link: Glycyl lysine isopeptide (Lys-Gly) (interchain with G-Cter in SUMO2); alternate. The disordered stretch occupies residues 498 to 526 (KEEPLSEEEADGAELEAEEEEPMDTAPST). Over residues 502–520 (LSEEEADGAELEAEEEEPM) the composition is skewed to acidic residues. The residue at position 503 (S503) is a Phosphoserine. Residues 558–710 (NPVACELKAF…MWYLKGTVQS (153 aa)) form a required for Pol III complex stability region. K661 is covalently cross-linked (Glycyl lysine isopeptide (Lys-Gly) (interchain with G-Cter in SUMO2)).

Component of the RNA polymerase III complex consisting of at least 17 subunits: a ten-subunit horseshoe-shaped catalytic core composed of POLR3A/RPC1, POLR3B/RPC2, POLR1C/RPAC1, POLR1D/RPAC2, POLR3K/RPC10, POLR2E/RPABC1, POLR2F/RPABC2, POLR2H/RPABC3, POLR2K/RPABC4 and POLR2L/RPABC5; the stalk composed of two subunits POLR3H/RPC8 and CRCP/RPC9, forming a structural mobile part that protrudes out of the core and functions primarily in transcription initiation; and additional subunits homologous to general transcription factors of the RNA polymerase II machinery, POLR3D/RPC4-POLR3E/RPC5 heterodimer and POLR3/CRPC3-POLR3F/RPC6-POLR3G/RPC7 heterotrimer.

The protein localises to the nucleus. DNA-dependent RNA polymerase catalyzes the transcription of DNA into RNA using the four ribonucleoside triphosphates as substrates. Specific peripheric component of RNA polymerase III (Pol III) which synthesizes small non-coding RNAs including 5S rRNA, snRNAs, tRNAs and miRNAs from at least 500 distinct genomic loci. Assembles with POLR3D/RPC4 forming a subcomplex that binds the Pol III core. Enables recruitment of Pol III at transcription initiation site and drives transcription initiation from both type 2 and type 3 DNA promoters. Required for efficient transcription termination and reinitiation. Plays a key role in sensing and limiting infection by intracellular bacteria and DNA viruses. Acts as a nuclear and cytosolic DNA sensor involved in innate immune response. Can sense non-self dsDNA that serves as template for transcription into dsRNA. The non-self RNA polymerase III transcripts, such as Epstein-Barr virus-encoded RNAs (EBERs) induce type I interferon and NF-kappa-B through the RIG-I pathway. This chain is DNA-directed RNA polymerase III subunit RPC5, found in Mus musculus (Mouse).